A 121-amino-acid polypeptide reads, in one-letter code: MQAKLIEILESSQIRLYPQFQPGDNVRVYFKIQEGNKTRIQIFEGLVIKFKKNGLSSNFVVRKISHNVGVERTFLLHSPLVDKVEVIRSNKVRRAKLYYMKKRSGKSARLKEIKRKELKNL.

This sequence belongs to the bacterial ribosomal protein bL19 family.

In terms of biological role, this protein is located at the 30S-50S ribosomal subunit interface and may play a role in the structure and function of the aminoacyl-tRNA binding site. The chain is Large ribosomal subunit protein bL19 from Mesomycoplasma hyopneumoniae (strain 7448) (Mycoplasma hyopneumoniae).